We begin with the raw amino-acid sequence, 402 residues long: Tryptophan synthase beta chain (402 aa).

The residue at position 91 (K91) is an N6-(pyridoxal phosphate)lysine.

Belongs to the TrpB family. In terms of assembly, tetramer of two alpha and two beta chains. It depends on pyridoxal 5'-phosphate as a cofactor.

The enzyme catalyses (1S,2R)-1-C-(indol-3-yl)glycerol 3-phosphate + L-serine = D-glyceraldehyde 3-phosphate + L-tryptophan + H2O. The protein operates within amino-acid biosynthesis; L-tryptophan biosynthesis; L-tryptophan from chorismate: step 5/5. Functionally, the beta subunit is responsible for the synthesis of L-tryptophan from indole and L-serine. This is Tryptophan synthase beta chain from Streptococcus thermophilus (strain ATCC BAA-491 / LMD-9).